Here is a 208-residue protein sequence, read N- to C-terminus: Mediator of RNA polymerase II transcription subunit 18 (208 aa).

The residue at position 66 (S66) is a Phosphoserine.

It belongs to the Mediator complex subunit 18 family. Component of the Mediator complex, which is composed of MED1, MED4, MED6, MED7, MED8, MED9, MED10, MED11, MED12, MED13, MED13L, MED14, MED15, MED16, MED17, MED18, MED19, MED20, MED21, MED22, MED23, MED24, MED25, MED26, MED27, MED29, MED30, MED31, CCNC, CDK8 and CDC2L6/CDK11. The MED12, MED13, CCNC and CDK8 subunits form a distinct module termed the CDK8 module. Mediator containing the CDK8 module is less active than Mediator lacking this module in supporting transcriptional activation. Individual preparations of the Mediator complex lacking one or more distinct subunits have been variously termed ARC, CRSP, DRIP, PC2, SMCC and TRAP.

The protein localises to the nucleus. In terms of biological role, component of the Mediator complex, a coactivator involved in the regulated transcription of nearly all RNA polymerase II-dependent genes. Mediator functions as a bridge to convey information from gene-specific regulatory proteins to the basal RNA polymerase II transcription machinery. Mediator is recruited to promoters by direct interactions with regulatory proteins and serves as a scaffold for the assembly of a functional preinitiation complex with RNA polymerase II and the general transcription factors. The polypeptide is Mediator of RNA polymerase II transcription subunit 18 (Med18) (Mus musculus (Mouse)).